The chain runs to 402 residues: Argininosuccinate synthase (402 aa).

Residues 11–19 (AYSGGLDTS) and Ala-39 each bind ATP. L-citrulline is bound by residues Tyr-90 and Ser-95. Residue Gly-120 coordinates ATP. Positions 122, 126, and 127 each coordinate L-aspartate. Residue Asn-126 participates in L-citrulline binding. Positions 130, 179, 188, 264, and 276 each coordinate L-citrulline.

It belongs to the argininosuccinate synthase family. Type 1 subfamily. In terms of assembly, homotetramer.

It localises to the cytoplasm. It carries out the reaction L-citrulline + L-aspartate + ATP = 2-(N(omega)-L-arginino)succinate + AMP + diphosphate + H(+). It functions in the pathway amino-acid biosynthesis; L-arginine biosynthesis; L-arginine from L-ornithine and carbamoyl phosphate: step 2/3. This is Argininosuccinate synthase from Roseiflexus castenholzii (strain DSM 13941 / HLO8).